Consider the following 1131-residue polypeptide: DNA polymerase II large subunit (1131 aa).

Belongs to the archaeal DNA polymerase II family. Heterodimer of a large subunit and a small subunit.

It catalyses the reaction DNA(n) + a 2'-deoxyribonucleoside 5'-triphosphate = DNA(n+1) + diphosphate. The catalysed reaction is Exonucleolytic cleavage in the 3'- to 5'-direction to yield nucleoside 5'-phosphates.. In terms of biological role, possesses two activities: a DNA synthesis (polymerase) and an exonucleolytic activity that degrades single-stranded DNA in the 3'- to 5'-direction. Has a template-primer preference which is characteristic of a replicative DNA polymerase. This chain is DNA polymerase II large subunit, found in Methanococcus maripaludis (strain C5 / ATCC BAA-1333).